Reading from the N-terminus, the 391-residue chain is Processive diacylglycerol beta-glucosyltransferase (391 aa).

Belongs to the glycosyltransferase 28 family. UgtP subfamily.

The protein localises to the cell membrane. The enzyme catalyses a 1,2-diacyl-3-O-(beta-D-glucopyranosyl)-sn-glycerol + UDP-alpha-D-glucose = a 1,2-diacyl-3-O-(beta-D-Glc-(1-&gt;6)-beta-D-Glc)-sn-glycerol + UDP + H(+). The catalysed reaction is a 1,2-diacyl-sn-glycerol + UDP-alpha-D-glucose = a 1,2-diacyl-3-O-(beta-D-glucopyranosyl)-sn-glycerol + UDP + H(+). Its pathway is glycolipid metabolism; diglucosyl-diacylglycerol biosynthesis. Processive glucosyltransferase involved in the biosynthesis of both the bilayer- and non-bilayer-forming membrane glucolipids. Is able to successively transfer two glucosyl residues to diacylglycerol (DAG), thereby catalyzing the formation of beta-monoglucosyl-DAG (3-O-(beta-D-glucopyranosyl)-1,2-diacyl-sn-glycerol) and beta-diglucosyl-DAG (3-O-(beta-D-glucopyranosyl-beta-(1-&gt;6)-D-glucopyranosyl)-1,2-diacyl-sn-glycerol). Beta-diglucosyl-DAG is the predominant glycolipid found in Bacillales and is also used as a membrane anchor for lipoteichoic acid (LTA). This Staphylococcus aureus (strain bovine RF122 / ET3-1) protein is Processive diacylglycerol beta-glucosyltransferase.